A 349-amino-acid polypeptide reads, in one-letter code: Putative inosamine-phosphate amidinotransferase 2 (349 aa).

Belongs to the amidinotransferase family.

The enzyme catalyses 1-amino-1-deoxy-scyllo-inositol 4-phosphate + L-arginine = 1-guanidino-1-deoxy-scyllo-inositol 4-phosphate + L-ornithine. It participates in antibiotic biosynthesis; streptomycin biosynthesis. It is not obvious if strB2 participates in streptomycin biosynthesis as an inosamine-phosphate amidinotransferase. Attempt to measure its activity have failed and the nucleophilic cysteine which is the key residue for amidine transfer is not conserved but replaced by a glycine residue. The protein is Putative inosamine-phosphate amidinotransferase 2 (strB2) of Streptomyces griseus.